A 94-amino-acid polypeptide reads, in one-letter code: Small ribosomal subunit protein bS6 (94 aa).

It belongs to the bacterial ribosomal protein bS6 family.

Functionally, binds together with bS18 to 16S ribosomal RNA. The protein is Small ribosomal subunit protein bS6 of Akkermansia muciniphila (strain ATCC BAA-835 / DSM 22959 / JCM 33894 / BCRC 81048 / CCUG 64013 / CIP 107961 / Muc).